Reading from the N-terminus, the 253-residue chain is DNA repair protein RecO (253 aa).

It belongs to the RecO family.

Its function is as follows. Involved in DNA repair and RecF pathway recombination. In Pediococcus pentosaceus (strain ATCC 25745 / CCUG 21536 / LMG 10740 / 183-1w), this protein is DNA repair protein RecO.